A 467-amino-acid chain; its full sequence is Cysteine--tRNA ligase (467 aa).

Cys28 contacts Zn(2+). The 'HIGH' region motif lies at 30-40; that stretch reads PTVYNYIHVGN. Zn(2+) contacts are provided by Cys212, His237, and Glu241. Positions 269–273 match the 'KMSKS' region motif; it reads KMSKS. Lys272 provides a ligand contact to ATP.

It belongs to the class-I aminoacyl-tRNA synthetase family. Monomer. Requires Zn(2+) as cofactor.

The protein resides in the cytoplasm. The enzyme catalyses tRNA(Cys) + L-cysteine + ATP = L-cysteinyl-tRNA(Cys) + AMP + diphosphate. The polypeptide is Cysteine--tRNA ligase (Oenococcus oeni (strain ATCC BAA-331 / PSU-1)).